Reading from the N-terminus, the 560-residue chain is Choline/ethanolamine transporter FLVCR1 (560 aa).

Residues 1–43 (MARPDDEVGPAVAPGHPLGKGYLPVPKGAPDGEARLVPQNGPE) are disordered. The Cytoplasmic portion of the chain corresponds to 1 to 92 (MARPDDEVGP…EDVPCPACPP (92 aa)). The helical transmembrane segment at 93 to 117 (RTALSPRRFVVLLIFSLYSLVNAFQ) threads the bilayer. At 118-135 (WIQYSSISNVFEDFYEVS) the chain is on the extracellular side. Residues 136 to 163 (PLHINWLSMVYMVAYVPLIFPATWLLDT) form a helical membrane-spanning segment. At 164 to 165 (RG) the chain is on the cytoplasmic side. A helical transmembrane segment spans residues 166–185 (LRLTALLGSGLNCLGAWVKC). The Extracellular segment spans residues 186 to 192 (GSVQRHL). Residues 193–221 (FWVTMLGQILCSVAQVFILGLPSPVASVW) traverse the membrane as a helical segment. Glutamine 207 lines the ethanolamine pocket. The Cytoplasmic segment spans residues 222–226 (FGPKE). The chain crosses the membrane as a helical span at residues 227-252 (VSTACATAVLGNQLGTAVGFLLPPVL). At 253 to 270 (VPALGTQNNTGLLAHTQN) the chain is on the extracellular side. A glycan (N-linked (GlcNAc...) asparagine) is linked at asparagine 270. Residues 271–300 (NTDLLAHNINTMFYGTAFISTFLFFLTVIA) form a helical membrane-spanning segment. Residues 301-336 (FKEKPPLPPSQAQAILRDSPPEEYSYKSSIWNLCRN) are Cytoplasmic-facing. A helical membrane pass occupies residues 337 to 367 (IPFVLLLVSYGIMTGAFYSISTLLNQIILTY). At 368–371 (YVGE) the chain is on the extracellular side. Residues 372-400 (EVNAGRIGLTLVVAGMVGSILCGLWLDYT) form a helical membrane-spanning segment. The Cytoplasmic portion of the chain corresponds to 401 to 402 (KT). A helical transmembrane segment spans residues 403-425 (YKQTTLIVYVLSFIGMLIFTFTL). Topologically, residues 426–428 (NLG) are extracellular. The helical transmembrane segment at 429-458 (YIVALFFTGGILGFFMTGYLPLGFEFAVEI) threads the bilayer. Over 459-466 (TYPESEGM) the chain is Cytoplasmic. Residues 467–492 (SSGLLNTAAQILGIFFTLAQGKITTD) traverse the membrane as a helical segment. Ethanolamine is bound at residue glutamine 476. Glutamine 476 is a choline binding site. Over 493-495 (YNS) the chain is Extracellular. Residues 496–518 (PEAGNIFLCAWMFVGIILTALIK) form a helical membrane-spanning segment. Residues 519 to 560 (SDLRRHNINTGLTNIDVKAVPVDSRVDPKPKAMVSIQSESSL) lie on the Cytoplasmic side of the membrane. Serine 542 is subject to Phosphoserine.

Belongs to the major facilitator superfamily. Feline leukemia virus subgroup C receptor (TC 2.A.1.28.1) family.

It is found in the cell membrane. It carries out the reaction choline(out) = choline(in). The enzyme catalyses ethanolamine(in) = ethanolamine(out). The catalysed reaction is heme b(in) = heme b(out). Uniporter that mediates the transport of extracellular choline and ethanolamine into cells, thereby playing a key role in phospholipid biosynthesis. Choline and ethanolamine are the precursors of phosphatidylcholine and phosphatidylethanolamine, respectively, the two most abundant phospholipids. Transport is not coupled with proton transport and is exclusively driven by the choline (or ethanolamine) gradient across the plasma membrane. Also acts as a heme b transporter that mediates heme efflux from the cytoplasm to the extracellular compartment. In Mus terricolor (Earth-colored mouse), this protein is Choline/ethanolamine transporter FLVCR1 (Flvcr1).